Reading from the N-terminus, the 376-residue chain is Cyclin-dependent kinase 9-B (376 aa).

The 301-residue stretch at 19–319 folds into the Protein kinase domain; the sequence is YERLAKIGQG…SDEALNHDFF (301 aa). ATP-binding positions include 25 to 33 and lysine 48; that span reads IGQGTFGEV. Aspartate 153 functions as the Proton acceptor in the catalytic mechanism. Positions 345–376 are disordered; sequence PPRRRGGHMPQQPANQARNPAATNQSEFDRVF. Positions 354 to 369 are enriched in low complexity; the sequence is PQQPANQARNPAATNQ.

It belongs to the protein kinase superfamily. CMGC Ser/Thr protein kinase family. CDC2/CDKX subfamily. In terms of assembly, associates with cyclin-T to form P-TEFb.

The protein localises to the nucleus. It carries out the reaction L-seryl-[protein] + ATP = O-phospho-L-seryl-[protein] + ADP + H(+). The enzyme catalyses L-threonyl-[protein] + ATP = O-phospho-L-threonyl-[protein] + ADP + H(+). The catalysed reaction is [DNA-directed RNA polymerase] + ATP = phospho-[DNA-directed RNA polymerase] + ADP + H(+). Functionally, member of the cyclin-dependent kinase pair (CDK9/cyclin-T) complex, also called positive transcription elongation factor B (P-TEFb), which is proposed to facilitate the transition from abortive to production elongation by phosphorylating the CTD (C-terminal domain) of the large subunit of RNA polymerase II (RNAP II) and SUPT5H. The polypeptide is Cyclin-dependent kinase 9-B (cdk9-b) (Xenopus laevis (African clawed frog)).